The sequence spans 1323 residues: MRGAGGPRGPRGPAKMLLLLALACASPFPEEVPGPGAAGGGTGGARPLNVALVFSGPAYAAEAARLGPAVAAAVRSPGLDVRPVALVLNGSDPRSLVLQLCDLLSGLRVHGVVFEDDSRAPAVAPILDFLSAQTSLPIVAVHGGAALVLTPKEKGSTFLQLGSSTEQQLQVIFEVLEEYDWTSFVAVTTRAPGHRAFLSYIEVLTDGSLVGWEHRGALTLDPGAGEAVLGAQLRSVSAQIRLLFCAREEAEPVFRAAEEAGLTGPGYVWFMVGPQLAGGGGSGVPGEPLLLPGGAPLPAGLFAVRSAGWRDDLARRVAAGVAVVARGAQALLRDYGFLPELGHDCRAQNRTHRGESLHRYFMNITWDNRDYSFNEDGFLVNPSLVVISLTRDRTWEVVGSWEQQTLRLKYPLWSRYGRFLQPVDDTQHLTVATLEERPFVIVEPADPISGTCIRDSVPCRSQLNRTHSPPPDAPRPEKRCCKGFCIDILKRLAHTIGFSYDLYLVTNGKHGKKIDGVWNGMIGEVFYQRADMAIGSLTINEERSEIVDFSVPFVETGISVMVARSNGTVSPSAFLEPYSPAVWVMMFVMCLTVVAVTVFIFEYLSPVGYNRSLATGKRPGGSTFTIGKSIWLLWALVFNNSVPVENPRGTTSKIMVLVWAFFAVIFLASYTANLAAFMIQEEYVDTVSGLSDRKFQRPQEQYPPLKFGTVPNGSTEKNIRSNYPDMHSYMVRYNQPRVEEALTQLKAGKLDAFIYDAAVLNYMARKDEGCKLVTIGSGKVFATTGYGIALHKGSRWKRPIDLALLQFLGDDEIEMLERLWLSGICHNDKIEVMSSKLDIDNMAGVFYMLLVAMGLSLLVFAWEHLVYWRLRHCLGPTHRMDFLLAFSRGMYSCCSAEAAPPPAKPPPPPQPLPSPAYPAARPPPGPAPFVPRERAAADRWRRAKGTGPPGGAALADGFHRYYGPIEPQGLGLGEARAAPRGAAGRPLSPPTTQPPQKPPPSYFAIVREQEPAEPPAGAFPGFPSPPAPPAAAAAAVGPPLCRLAFEDESPPAPSRWPRSDPESQPLLGGGAGGPSAGAPTAPPPRRAAPPPCAYLDLEPSPSDSEDSESLGGASLGGLEPWWFADFPYPYAERLGPPPGRYWSVDKLGGWRAGSWDYLPPRGGPAWHCRHCASLELLPPPRHLSCSHDGLDGGWWAPPPPPWAAGPPPRRRARCGCPRPHPHRPRASHRAPAAAPHHHRHRRAAGGWDLPPPAPTSRSLEDLSSCPRAAPTRRLTGPSRHARRCPHAAHWGPPLPTASHRRHRGGDLGTRRGSAHFSSLESEV.

A signal peptide spans 1-27 (MRGAGGPRGPRGPAKMLLLLALACASP). Topologically, residues 28 to 579 (FPEEVPGPGA…SPSAFLEPYS (552 aa)) are extracellular. A glycan (N-linked (GlcNAc...) asparagine) is linked at N89. Residues C101 and C345 are joined by a disulfide bond. N-linked (GlcNAc...) asparagine glycans are attached at residues N349, N363, N381, and N464. 2 disulfide bridges follow: C452–C480 and C459–C481. L-glutamate is bound by residues S536, T538, and R543. N-linked (GlcNAc...) asparagine glycosylation occurs at N566. The helical transmembrane segment at 580–601 (PAVWVMMFVMCLTVVAVTVFIF) threads the bilayer. At 602 to 626 (EYLSPVGYNRSLATGKRPGGSTFTI) the chain is on the cytoplasmic side. The discontinuously helical intramembrane region spans 627–638 (GKSIWLLWALVF). The tract at residues 628–647 (KSIWLLWALVFNNSVPVENP) is pore-forming. The Cytoplasmic portion of the chain corresponds to 639 to 650 (NNSVPVENPRGT). A helical transmembrane segment spans residues 651-671 (TSKIMVLVWAFFAVIFLASYT). The Extracellular portion of the chain corresponds to 672–840 (ANLAAFMIQE…EVMSSKLDID (169 aa)). N-linked (GlcNAc...) asparagine glycosylation occurs at N712. Positions 714, 715, and 756 each coordinate L-glutamate. A disulfide bridge connects residues C770 and C825. A helical transmembrane segment spans residues 841–864 (NMAGVFYMLLVAMGLSLLVFAWEH). Over 865–1323 (LVYWRLRHCL…AHFSSLESEV (459 aa)) the chain is Cytoplasmic. 3 disordered regions span residues 897 to 952 (EAAP…PGGA), 977 to 1112 (AAPR…SLGG), and 1201 to 1323 (PWAA…ESEV). Pro residues predominate over residues 899 to 929 (APPPAKPPPPPQPLPSPAYPAARPPPGPAPF). Over residues 931-940 (PRERAAADRW) the composition is skewed to basic and acidic residues. Over residues 977–986 (AAPRGAAGRP) the composition is skewed to low complexity. A compositionally biased stretch (pro residues) spans 987-1001 (LSPPTTQPPQKPPPS). Over residues 1030–1039 (AAAAAAVGPP) the composition is skewed to low complexity. Residues 1080–1092 (TAPPPRRAAPPPC) show a composition bias toward pro residues. The segment covering 1208–1228 (PRRRARCGCPRPHPHRPRASH) has biased composition (basic residues). The residue at position 1303 (R1303) is an Omega-N-methylarginine. S1313 is subject to Phosphoserine. A PDZ-binding motif is present at residues 1321 to 1323 (SEV).

This sequence belongs to the glutamate-gated ion channel (TC 1.A.10.1) family. NR2D/GRIN2D subfamily. In terms of assembly, heterotetramer. Forms heterotetrameric channels composed of two GluN1/zeta subunits (GRIN1), and two identical GluN2/epsilon subunits (GRIN2A, GRIN2B, GRIN2C or GRIN2D) or GluN3 subunits (GRIN3A or GRIN3B) (in vitro). In vivo, the subunit composition may depend on the expression levels of the different subunits. Interacts with PDZ domains of PATJ and DLG4. Detected in neonate brain synaptosomes (at protein level).

The protein localises to the cell membrane. It is found in the postsynaptic cell membrane. It catalyses the reaction Ca(2+)(in) = Ca(2+)(out). It carries out the reaction Na(+)(in) = Na(+)(out). The catalysed reaction is K(+)(in) = K(+)(out). In terms of biological role, component of N-methyl-D-aspartate (NMDA) receptors (NMDARs) that function as heterotetrameric, ligand-gated cation channels with high calcium permeability and voltage-dependent block by Mg(2+). Participates in synaptic plasticity for learning and memory formation. Channel activation requires binding of the neurotransmitter L-glutamate to the GluN2 subunit, glycine or D-serine binding to the GluN1 subunit, plus membrane depolarization to eliminate channel inhibition by Mg(2+). NMDARs mediate simultaneously the potasium efflux and the influx of calcium and sodium. Each GluN2 subunit confers differential attributes to channel properties, including activation, deactivation and desensitization kinetics, pH sensitivity, Ca2(+) permeability, and binding to allosteric modulators. The polypeptide is Glutamate receptor ionotropic, NMDA 2D (Mus musculus (Mouse)).